Consider the following 602-residue polypeptide: Elongation factor 4 (602 aa).

Residues 6 to 188 form the tr-type G domain; the sequence is DHIRNFSIVA…AIVNKLPAPK (183 aa). GTP contacts are provided by residues 18-23 and 135-138; these read DHGKST and NKID.

Belongs to the TRAFAC class translation factor GTPase superfamily. Classic translation factor GTPase family. LepA subfamily.

It is found in the cell inner membrane. It carries out the reaction GTP + H2O = GDP + phosphate + H(+). In terms of biological role, required for accurate and efficient protein synthesis under certain stress conditions. May act as a fidelity factor of the translation reaction, by catalyzing a one-codon backward translocation of tRNAs on improperly translocated ribosomes. Back-translocation proceeds from a post-translocation (POST) complex to a pre-translocation (PRE) complex, thus giving elongation factor G a second chance to translocate the tRNAs correctly. Binds to ribosomes in a GTP-dependent manner. The protein is Elongation factor 4 of Brucella suis (strain ATCC 23445 / NCTC 10510).